A 400-amino-acid chain; its full sequence is MAWRRREASVGARGVLALALLALALCVPGARGRALEWFSAVVNIEYVDPQTNLTVWSVSESGRFGDSSPKEGAHGLVGVPWAPGGDLEGCAPDTRFFVPEPGGRGAAPWVALVARGGCTFKDKVLVAARRNASAVVLYNEERYGNITLPMSHAGTGNIVVIMISYPKGREILELVQKGIPVTMTIGVGTRHVQEFISGQSVVFVAIAFITMMIISLAWLIFYYIQRFLYTGSQIGSQSHRKETKKVIGQLLLHTVKHGEKGIDVDAENCAVCIENFKVKDIIRILPCKHIFHRICIDPWLLDHRTCPMCKLDVIKALGYWGEPGDVQEMPAPESPPGRDPAANLSLALPDDDGSDDSSPPSASPAESEPQCDPSFKGDAGENTALLEAGRSDSRHGGPIS.

The first 32 residues, 1–32 (MAWRRREASVGARGVLALALLALALCVPGARG), serve as a signal peptide directing secretion. Asn-52 and Asn-145 each carry an N-linked (GlcNAc...) asparagine glycan. The PA domain maps to 67–175 (SSPKEGAHGL…PKGREILELV (109 aa)). Residues 201 to 221 (VVFVAIAFITMMIISLAWLIF) traverse the membrane as a helical segment. The RING-type; atypical zinc-finger motif lies at 269–310 (CAVCIENFKVKDIIRILPCKHIFHRICIDPWLLDHRTCPMCK). The tract at residues 325–400 (DVQEMPAPES…SDSRHGGPIS (76 aa)) is disordered. Residue Ser-345 is modified to Phosphoserine. Positions 356-368 (DSSPPSASPAESE) are enriched in low complexity. A compositionally biased stretch (basic and acidic residues) spans 389-400 (GRSDSRHGGPIS).

It localises to the membrane. It carries out the reaction S-ubiquitinyl-[E2 ubiquitin-conjugating enzyme]-L-cysteine + [acceptor protein]-L-lysine = [E2 ubiquitin-conjugating enzyme]-L-cysteine + N(6)-ubiquitinyl-[acceptor protein]-L-lysine.. The protein operates within protein modification; protein ubiquitination. In terms of biological role, E3 ubiquitin-protein ligase. Ubiquitinates BRAF, inducing its proteasomal degradation. The protein is E3 ubiquitin-protein ligase RNF149 (RNF149) of Homo sapiens (Human).